The sequence spans 418 residues: Serine/threonine-protein kinase PCRK1 (418 aa).

A disordered region spans residues 36–63 (GSEFNSRDVSGTSTESSMGRKNSYPPVS). Residues 84-369 (FSRSVMIGEG…EVLEMVNKIV (286 aa)) enclose the Protein kinase domain. ATP-binding positions include 90-98 (IGEGGFGCV) and Lys118. Asp218 (proton acceptor) is an active-site residue. Residues Ser373, Ser377, and Ser385 each carry the phosphoserine modification.

Belongs to the protein kinase superfamily. Ser/Thr protein kinase family. In terms of assembly, interacts with FLS2.

The protein localises to the cell membrane. It catalyses the reaction L-seryl-[protein] + ATP = O-phospho-L-seryl-[protein] + ADP + H(+). The enzyme catalyses L-threonyl-[protein] + ATP = O-phospho-L-threonyl-[protein] + ADP + H(+). Functionally, involved in the activation of early immune responses. Plays a role in pattern-triggered immunity (PTI) induced by pathogen-associated molecular patterns (PAMPs) and damage-associated molecular patterns (DAMPs). Contributes to PTI in response to the bacterial pathogen Pseudomonas syringae pv maculicola strain ES4326. Contributes to PTI in response to the bacterial pathogen Pseudomonas syringae pv tomato strain DC3000. Functions redundantly with PCRK2 in basal resistance against bacterial pathogens and in regulation of plant immunity. Functions together with PCRK2 downstream of the PAMP receptor FLS2. Contributes to the induction of SARD1 and CBP60G, which are transcriptional activator of ICS1, an enzyme involved in salicylate (SA) biosynthesis upon pathogen attack. The protein is Serine/threonine-protein kinase PCRK1 of Arabidopsis thaliana (Mouse-ear cress).